We begin with the raw amino-acid sequence, 205 residues long: dTTP/UTP pyrophosphatase (205 aa).

Catalysis depends on D66, which acts as the Proton acceptor.

Belongs to the Maf family. YhdE subfamily. A divalent metal cation serves as cofactor.

The protein resides in the cytoplasm. The catalysed reaction is dTTP + H2O = dTMP + diphosphate + H(+). It catalyses the reaction UTP + H2O = UMP + diphosphate + H(+). In terms of biological role, nucleoside triphosphate pyrophosphatase that hydrolyzes dTTP and UTP. May have a dual role in cell division arrest and in preventing the incorporation of modified nucleotides into cellular nucleic acids. This Anaeromyxobacter sp. (strain Fw109-5) protein is dTTP/UTP pyrophosphatase.